We begin with the raw amino-acid sequence, 473 residues long: Cysteine--tRNA ligase (473 aa).

Position 30 (Cys30) interacts with Zn(2+). The 'HIGH' region motif lies at 32–42; the sequence is MTVYDYCHIGH. Zn(2+) is bound by residues Cys213, His238, and Glu242. The short motif at 270–274 is the 'KMSKS' region element; the sequence is KMSKS. Lys273 contributes to the ATP binding site.

This sequence belongs to the class-I aminoacyl-tRNA synthetase family. In terms of assembly, monomer. Zn(2+) is required as a cofactor.

It localises to the cytoplasm. The enzyme catalyses tRNA(Cys) + L-cysteine + ATP = L-cysteinyl-tRNA(Cys) + AMP + diphosphate. The protein is Cysteine--tRNA ligase of Acinetobacter baylyi (strain ATCC 33305 / BD413 / ADP1).